Here is a 304-residue protein sequence, read N- to C-terminus: Dihydroorotate dehydrogenase B (NAD(+)), catalytic subunit (304 aa).

Residues S21 and 45 to 46 contribute to the FMN site; that span reads KA. Substrate-binding positions include K45 and 69 to 73; that span reads NAIGL. FMN-binding residues include N99 and N127. A substrate-binding site is contributed by N127. C130 functions as the Nucleophile in the catalytic mechanism. K165 and I191 together coordinate FMN. Residue 192-193 participates in substrate binding; it reads NT. FMN-binding positions include G217, 243-244, and 265-266; these read GG and GT.

Belongs to the dihydroorotate dehydrogenase family. Type 1 subfamily. As to quaternary structure, heterotetramer of 2 PyrK and 2 PyrD type B subunits. Requires FMN as cofactor.

It is found in the cytoplasm. It carries out the reaction (S)-dihydroorotate + NAD(+) = orotate + NADH + H(+). It functions in the pathway pyrimidine metabolism; UMP biosynthesis via de novo pathway; orotate from (S)-dihydroorotate (NAD(+) route): step 1/1. Its function is as follows. Catalyzes the conversion of dihydroorotate to orotate with NAD(+) as electron acceptor. This chain is Dihydroorotate dehydrogenase B (NAD(+)), catalytic subunit (pyrD), found in Listeria monocytogenes serotype 4b (strain F2365).